A 570-amino-acid polypeptide reads, in one-letter code: Probable D-xylulose kinase A (570 aa).

Residues H98, D279, and N280 each contribute to the substrate site. ATP-binding positions include W363, 470-471, and N474; that span reads GG.

The protein belongs to the FGGY kinase family.

It is found in the cytoplasm. The catalysed reaction is D-xylulose + ATP = D-xylulose 5-phosphate + ADP + H(+). In terms of biological role, highly specific D-xylulose kinase which participates in the catabolism of xylose. Xylose is a major component of hemicelluloses such as xylan. Most fungi utilize D-xylose via three enzymatic reactions, xylose reductase (XR), xylitol dehydrogenase (XDH), and xylulokinase, to form xylulose 5-phosphate, which enters pentose phosphate pathway. This is Probable D-xylulose kinase A (xkiA) from Arthroderma otae (strain ATCC MYA-4605 / CBS 113480) (Microsporum canis).